Consider the following 147-residue polypeptide: Transmembrane protein 210 (147 aa).

Positions 1-31 (MAPGPWPVSCLRGGPLGLTYLSLLLIPAAAG) are cleaved as a signal peptide. At 32–47 (TYCECSLGLSREALIA) the chain is on the extracellular side. The helical transmembrane segment at 48 to 68 (LLVVLAGISASCFCALVIVAI) threads the bilayer. At 69-147 (GVLRAKGETC…PPPPPPLPPE (79 aa)) the chain is on the cytoplasmic side. A disordered region spans residues 128–147 (AIPMEASSEEPPPPPPLPPE). A compositionally biased stretch (pro residues) spans 137-147 (EPPPPPPLPPE).

The protein resides in the membrane. Its subcellular location is the cytoplasmic vesicle. It is found in the secretory vesicle. The protein localises to the acrosome. The chain is Transmembrane protein 210 (TMEM210) from Homo sapiens (Human).